We begin with the raw amino-acid sequence, 476 residues long: Efflux pump atB (476 aa).

The segment at Met-1–Ile-38 is disordered. The next 10 membrane-spanning stretches (helical) occupy residues Leu-69–Leu-89, Lys-96–Ala-116, Phe-127–Leu-147, Trp-186–Val-206, Leu-264–Phe-284, Phe-294–Ile-314, Leu-347–Thr-367, Val-372–Phe-392, Tyr-403–Phe-425, and Trp-440–Tyr-460.

Belongs to the major facilitator superfamily.

The protein localises to the cell membrane. Functionally, efflux pump that might be required for efficient secretion of terreic acid. This Aspergillus terreus (strain NIH 2624 / FGSC A1156) protein is Efflux pump atB.